The following is a 232-amino-acid chain: Ion-translocating oxidoreductase complex subunit E (232 aa).

Helical transmembrane passes span Leu39–Val59, Ile69–Ala89, Gly93–Gly113, Ala128–Thr148, and Ser182–Leu202.

The protein belongs to the NqrDE/RnfAE family. The complex is composed of six subunits: RnfA, RnfB, RnfC, RnfD, RnfE and RnfG.

It localises to the cell inner membrane. Part of a membrane-bound complex that couples electron transfer with translocation of ions across the membrane. The chain is Ion-translocating oxidoreductase complex subunit E from Shewanella oneidensis (strain ATCC 700550 / JCM 31522 / CIP 106686 / LMG 19005 / NCIMB 14063 / MR-1).